The primary structure comprises 245 residues: Ribosomal RNA small subunit methyltransferase J (245 aa).

S-adenosyl-L-methionine-binding positions include 94–95 (RD), 110–111 (ER), and D164.

This sequence belongs to the methyltransferase superfamily. RsmJ family.

The protein resides in the cytoplasm. The enzyme catalyses guanosine(1516) in 16S rRNA + S-adenosyl-L-methionine = N(2)-methylguanosine(1516) in 16S rRNA + S-adenosyl-L-homocysteine + H(+). Its function is as follows. Specifically methylates the guanosine in position 1516 of 16S rRNA. The sequence is that of Ribosomal RNA small subunit methyltransferase J from Dechloromonas aromatica (strain RCB).